The following is a 239-amino-acid chain: Octanoyltransferase (239 aa).

One can recognise a BPL/LPL catalytic domain in the interval 48 to 236; sequence EGGDELVWLV…AFETVFGETT (189 aa). Substrate contacts are provided by residues 87-94, 167-169, and 180-182; these read RGGEYTYH, ALG, and GLS. Residue cysteine 198 is the Acyl-thioester intermediate of the active site.

The protein belongs to the LipB family.

The protein resides in the cytoplasm. It catalyses the reaction octanoyl-[ACP] + L-lysyl-[protein] = N(6)-octanoyl-L-lysyl-[protein] + holo-[ACP] + H(+). It functions in the pathway protein modification; protein lipoylation via endogenous pathway; protein N(6)-(lipoyl)lysine from octanoyl-[acyl-carrier-protein]: step 1/2. Catalyzes the transfer of endogenously produced octanoic acid from octanoyl-acyl-carrier-protein onto the lipoyl domains of lipoate-dependent enzymes. Lipoyl-ACP can also act as a substrate although octanoyl-ACP is likely to be the physiological substrate. In Rhizobium etli (strain ATCC 51251 / DSM 11541 / JCM 21823 / NBRC 15573 / CFN 42), this protein is Octanoyltransferase.